A 700-amino-acid polypeptide reads, in one-letter code: Protein claret segregational (700 aa).

Residues serine 94 and serine 96 each carry the phosphoserine modification. The interval 141-185 is disordered; it reads APSSITATAVKRPPVTRPAPRAAGGAAAKKPAGTGAAASSGAAAA. Positions 149-185 are enriched in low complexity; it reads AVKRPPVTRPAPRAAGGAAAKKPAGTGAAASSGAAAA. Residues 196–346 adopt a coiled-coil conformation; that stretch reads KARFHDLLEK…ELHNTVMDLR (151 aa). A Kinesin motor domain is found at 348–670; that stretch reads NIRVFCRIRP…LRFAASVNSC (323 aa). Position 434-441 (434-441) interacts with ATP; sequence GQTGSGKT. The tract at residues 664-668 is required for minus-end directionality; sequence AASVN. The tract at residues 681-700 is disordered; that stretch reads LNNSVANSSTQSNNSGSFDK.

It belongs to the TRAFAC class myosin-kinesin ATPase superfamily. Kinesin family. NCD subfamily.

The protein resides in the cytoplasm. Its subcellular location is the cytoskeleton. The enzyme catalyses ATP + H2O = ADP + phosphate + H(+). Its function is as follows. Minus-end-directed microtubule-based motor protein. Has ATPase activity. Required for normal chromosomal segregation in meiosis in females, and in early mitotic divisions of the embryo. The sequence is that of Protein claret segregational (ncd) from Drosophila melanogaster (Fruit fly).